The primary structure comprises 644 residues: MADYSTVPPPSSGSAGGGGGGGGGGGVNDAFKDALQRARQIAAKIGGDAGTSLNSNDYGYGGQKRPLEDGDQPDAKKVAPQNDSFGTQLPPMHQQQSRSVMTEEYKVPDGMVGFIIGRGGEQISRIQQESGCKIQIAPDSGGLPERSCMLTGTPESVQSAKRLLDQIVEKGRPAPGFHHGDGPGNAVQEIMIPASKAGLVIGKGGETIKQLQERAGVKMVMIQDGPQNTGADKPLRITGDPYKVQQAKEMVLELIRDQGGFREVRNEYGSRIGGNEGIDVPIPRFAVGIVIGRNGEMIKKIQNDAGVRIQFKPDDGTTPERIAQITGPPDRCQHAAEIITDLLRSVQAGNPGGPGPGGRGRGRGQGNWNMGPPGGLQEFNFIVPTGKTGLIIGKGGETIKSISQQSGARIELQRNPPPNADPNMKLFTIRGTPQQIDYARQLIEEKIGGPVNPLGPPVPHGPHGVPGPHGPPGPPGPGTPMGPYNPAPYNPGPPGPAPHGPPAPYAPQGWGNAYPHWQQQAPPDPAKAGTDPNSAAWAAYYAHYYQQQAQPPPAAPAGAPTTTQTNGQGDQQNPAPAGQVDYTKAWEEYYKKMGQAVPAPTGAPPGGQPDYSAAWAEYYRQQAAYYAQTSPQGMPQHPPAPQGQ.

2 disordered regions span residues 1-31 (MADY…NDAF) and 44-94 (KIGG…PMHQ). Alanine 2 carries the N-acetylalanine modification. Over residues 14 to 27 (SAGGGGGGGGGGGV) the composition is skewed to gly residues. A phosphoserine mark is found at serine 52 and serine 55. The segment covering 65–77 (RPLEDGDQPDAKK) has biased composition (basic and acidic residues). The span at 81-94 (QNDSFGTQLPPMHQ) shows a compositional bias: polar residues. KH domains lie at 100–164 (VMTE…KRLL), 185–251 (NAVQ…KEMV), and 275–339 (NEGI…AEII). Serine 140 is modified (phosphoserine). Threonine 153 carries the phosphothreonine modification. Omega-N-methylarginine occurs at positions 321, 359, 361, and 363. Residues 346-365 (VQAGNPGGPGPGGRGRGRGQ) are disordered. Positions 350 to 365 (NPGGPGPGGRGRGRGQ) are enriched in gly residues. Positions 376-443 (LQEFNFIVPT…QQIDYARQLI (68 aa)) constitute a KH 4 domain. Threonine 432 is subject to Phosphothreonine. Disordered regions lie at residues 447–532 (IGGP…GTDP) and 548–580 (QAQP…AGQV). Over residues 468-505 (PHGPPGPPGPGTPMGPYNPAPYNPGPPGPAPHGPPAPY) the composition is skewed to pro residues. Over residues 556–573 (PAGAPTTTQTNGQGDQQN) the composition is skewed to low complexity. Serine 630 carries the post-translational modification Phosphoserine.

Found in a complex with PUF60 and far upstream element (FUSE) DNA segment. Interacts with PUF60 and JTV1. In terms of processing, ubiquitinated. This targets the protein for proteasome-mediated degradation.

The protein resides in the nucleus. Regulates MYC expression by binding to a single-stranded far-upstream element (FUSE) upstream of the MYC promoter. May act both as activator and repressor of transcription. In Homo sapiens (Human), this protein is Far upstream element-binding protein 1 (FUBP1).